A 105-amino-acid chain; its full sequence is Endogenous retrovirus group K member 6 Rec protein (105 aa).

Residues 1–49 (MNPSEMQRKAPPRRRRHRNRAPLTHKMNKMVTSEEQMKLPSTKKAEPPT) form a disordered region. Residues 10 to 20 (APPRRRRHRNR) show a composition bias toward basic residues. A Nuclear localization signal motif is present at residues 13 to 20 (RRRRHRNR). Positions 50-59 (WAQLKKLTQL) match the Nuclear export signal motif.

As to quaternary structure, forms homodimers, homotrimers, and homotetramers via a C-terminal domain. Associates with XPO1 and with ZNF145. In terms of tissue distribution, expressed at higher level in placenta, expressed at lower level in several organs and cell lines.

It localises to the cytoplasm. The protein resides in the nucleus. The protein localises to the nucleolus. In terms of biological role, retroviral replication requires the nuclear export and translation of unspliced, singly-spliced and multiply-spliced derivatives of the initial genomic transcript. Rec interacts with a highly structured RNA element (RcRE) present in the viral 3'LTR and recruits the cellular nuclear export machinery. This permits export to the cytoplasm of unspliced genomic or incompletely spliced subgenomic viral transcripts. The protein is Endogenous retrovirus group K member 6 Rec protein (ERVK-6) of Homo sapiens (Human).